A 234-amino-acid polypeptide reads, in one-letter code: Conidial surface nicotinamide adenine dinucleotide glycohydrolase nadA (234 aa).

A signal peptide spans 1-20 (MIFTNAILVISALLPATVLS). Positions 21–117 (LQHTEDSLFP…LDTEEQPILG (97 aa)) are thump. Cystine bridges form between Cys-33-Cys-80 and Cys-38-Cys-50. Residues Asn-45, Asn-95, and Asn-118 are each glycosylated (N-linked (GlcNAc...) asparagine). The 93-residue stretch at 120–212 (TLPVGMKLDR…GLIDDGYLRR (93 aa)) folds into the TNT domain. Arg-129 is a catalytic residue. Residues Phe-130, Thr-136, and Arg-148 each contribute to the NAD(+) site. Residue Gln-194 is part of the active site. Positions 216, 219, 220, and 223 each coordinate Ca(2+).

Belongs to the fungal surface NADase family. As to quaternary structure, homodimer. Post-translationally, N-glycosylated.

The protein resides in the secreted. The catalysed reaction is NAD(+) + H2O = ADP-D-ribose + nicotinamide + H(+). It carries out the reaction NADP(+) + H2O = ADP-D-ribose 2'-phosphate + nicotinamide + H(+). With respect to regulation, the catalytic activity is positively regulated by calcium via its binding to the calcium-binding site. Its function is as follows. Conidial surface nicotinamide adenine dinucleotide glycohydrolase that cleave NAD(+) and NADP(+) but not their reduced counterparts, NADH and NADPH. Lacks both ADP-ribosyl cyclase and base exchange activity and does not mediate synthesis of calcium messengers cADPR or NAADP. Plays a role in pathogenicity by depleting the host's NAD(+) pool. This Aspergillus fumigatus (strain ATCC MYA-4609 / CBS 101355 / FGSC A1100 / Af293) (Neosartorya fumigata) protein is Conidial surface nicotinamide adenine dinucleotide glycohydrolase nadA.